Reading from the N-terminus, the 480-residue chain is GTPase Der (480 aa).

EngA-type G domains lie at Pro5 to Glu170 and Leu178 to Met351. Residues Gly11–Ser18, Asp58–Ile62, Asn123–Asp126, Gly184–Ser191, Asp231–Val235, and Asn296–Asp299 contribute to the GTP site. Residues Phe352–Glu436 enclose the KH-like domain. The segment covering Pro438–Leu454 has biased composition (polar residues). A disordered region spans residues Pro438 to Arg480. Positions Arg455–Arg480 are enriched in basic and acidic residues.

Belongs to the TRAFAC class TrmE-Era-EngA-EngB-Septin-like GTPase superfamily. EngA (Der) GTPase family. In terms of assembly, associates with the 50S ribosomal subunit.

In terms of biological role, GTPase that plays an essential role in the late steps of ribosome biogenesis. In Psychrobacter cryohalolentis (strain ATCC BAA-1226 / DSM 17306 / VKM B-2378 / K5), this protein is GTPase Der.